The primary structure comprises 393 residues: MYKNQLQELAQRSCFNLPSYTCIREGPDHAPRFKASVNFNGEIFESPTYCSTLRQAEHAAAEVSLNVLSSRVPSKSLTAKILDETGIYKNLLQETAHRAGLDLPMYTSVRSGSCHFPGFSCTVELAGMTFTGESAKTKKQAEKNAAIAAWSSLKKMSSLDSQDEEKEQEAVARVLSRFKPKEVRRRETTNQWRRRTSQQDSNKDLLIERLRWINLLTNQASSSSSTSTPNQHKNSSFISLIPPPPPPKSSKILPFIQQYKDRSSQEAKTETATEMINSKAKVNETSTRLSKQMPFSDMNRYNFVGGCSVNPYSLAPAVQMRSVIPVFAAPPPKPNPNLNPSSLSSSVNEFTSSNNSCSVLNTPGLGGQEKKNLTREMIKLGSESRILDQTHDS.

DRBM domains follow at residues 1–70 (MYKN…VLSS) and 87–155 (IYKN…SLKK). Disordered stretches follow at residues 220–251 (ASSSSSTSTPNQHKNSSFISLIPPPPPPKSSK) and 335–371 (NPNLNPSSLSSSVNEFTSSNNSCSVLNTPGLGGQEKK). A compositionally biased stretch (polar residues) spans 347–361 (VNEFTSSNNSCSVLN).

In terms of assembly, heterodimer with DRB1, DRB2 or DRB4. Interacts with DCL1 and DCL3. Expressed in the shoot apical meristem (SAM).

Binds double-stranded RNA. May be involved in RNA-mediated silencing. In Arabidopsis thaliana (Mouse-ear cress), this protein is Double-stranded RNA-binding protein 5 (DRB5).